Here is a 403-residue protein sequence, read N- to C-terminus: Protein IQ-DOMAIN 23 (403 aa).

A disordered region spans residues Met-1–Thr-43. Residues Ser-10–Ala-17 carry the Nuclear localization signal motif. Residues Ser-27–Thr-43 show a composition bias toward polar residues. Positions Gln-115 to Arg-133 are calmodulin-binding. 2 IQ domains span residues Glu-116–Lys-144 and Leu-145–Thr-167. Disordered stretches follow at residues Arg-176 to His-208, Ile-242 to Arg-301, and Gly-381 to Val-403. Basic and acidic residues predominate over residues Leu-257–Arg-267.

It belongs to the IQD family. As to quaternary structure, binds to multiple calmodulin (CaM) in the presence of Ca(2+) and CaM-like proteins.

Its subcellular location is the nucleus. It localises to the nucleolus. The protein resides in the cytoplasm. It is found in the cytoskeleton. The protein localises to the cell membrane. Its function is as follows. May be involved in cooperative interactions with calmodulins or calmodulin-like proteins. Recruits calmodulin proteins to microtubules, thus being a potential scaffold in cellular signaling and trafficking. May associate with nucleic acids and regulate gene expression at the transcriptional or post-transcriptional level. The sequence is that of Protein IQ-DOMAIN 23 from Arabidopsis thaliana (Mouse-ear cress).